The sequence spans 366 residues: IgG receptor FcRn large subunit p51 (366 aa).

Positions 1–22 are cleaved as a signal peptide; it reads MGMSQPGVLLSLLLVLLPQTWG. The alpha-1 stretch occupies residues 23 to 111; that stretch reads AEPRLPLMYH…RTLENQINGT (89 aa). At 23–298 the chain is on the extracellular side; sequence AEPRLPLMYH…VDLDSPARSS (276 aa). N-linked (GlcNAc...) asparagine glycosylation is found at Asn-109, Asn-126, Asn-150, and Asn-247. The alpha-2 stretch occupies residues 112-201; that stretch reads FTLQGLLGCE…ERGRQNLEWK (90 aa). 2 cysteine pairs are disulfide-bonded: Cys-120–Cys-183 and Cys-222–Cys-276. The alpha-3 stretch occupies residues 202–291; that stretch reads EPPSMRLKAR…GLAQPLTVDL (90 aa). The region spanning 203 to 290 is the Ig-like C1-type domain; it reads PPSMRLKARP…EGLAQPLTVD (88 aa). Positions 293-298 are connecting peptide; sequence SPARSS. The chain crosses the membrane as a helical span at residues 299–322; sequence VPVVGIILGLLLVVVAIAGGVLLW. Residues 323–366 are Cytoplasmic-facing; sequence NRMRSGLPAPWLSLSGDDSGDLLPGGNLPPEAEPQGVNAFPATS. Ser-335 bears the Phosphoserine mark. The segment at 344–366 is disordered; that stretch reads LLPGGNLPPEAEPQGVNAFPATS.

Belongs to the immunoglobulin superfamily. FcRn complex consists of two subunits: p51, and p14 which is equivalent to beta-2-microglobulin. It forms an MHC class I-like heterodimer. Interacts with albumin/ALB; this interaction regulates ALB homeostasis. In terms of tissue distribution, intestinal epithelium.

The protein localises to the cell membrane. The protein resides in the endosome membrane. In terms of biological role, cell surface receptor that transfers passive humoral immunity from the mother to the newborn. Binds to the Fc region of monomeric immunoglobulin gamma and mediates its selective uptake from milk. IgG in the milk is bound at the apical surface of the intestinal epithelium. The resultant FcRn-IgG complexes are transcytosed across the intestinal epithelium and IgG is released from FcRn into blood or tissue fluids. Throughout life, contributes to effective humoral immunity by recycling IgG and extending its half-life in the circulation. Mechanistically, monomeric IgG binding to FcRn in acidic endosomes of endothelial and hematopoietic cells recycles IgG to the cell surface where it is released into the circulation. In addition of IgG, regulates homeostasis of the other most abundant circulating protein albumin/ALB. The polypeptide is IgG receptor FcRn large subunit p51 (Fcgrt) (Rattus norvegicus (Rat)).